Here is a 465-residue protein sequence, read N- to C-terminus: Argininosuccinate lyase (465 aa).

The protein belongs to the lyase 1 family. Argininosuccinate lyase subfamily.

Its subcellular location is the cytoplasm. The enzyme catalyses 2-(N(omega)-L-arginino)succinate = fumarate + L-arginine. It functions in the pathway amino-acid biosynthesis; L-arginine biosynthesis; L-arginine from L-ornithine and carbamoyl phosphate: step 3/3. The chain is Argininosuccinate lyase from Clostridium botulinum (strain Alaska E43 / Type E3).